Reading from the N-terminus, the 245-residue chain is tRNA (guanine-N(7)-)-methyltransferase (245 aa).

Residues Gly70, 93–94, 126–127, and Leu146 each bind S-adenosyl-L-methionine; these read EI and NA. Asp149 is a catalytic residue. 224-226 provides a ligand contact to S-adenosyl-L-methionine; that stretch reads SEE.

The protein belongs to the class I-like SAM-binding methyltransferase superfamily. TrmB family.

Its subcellular location is the nucleus. The catalysed reaction is guanosine(46) in tRNA + S-adenosyl-L-methionine = N(7)-methylguanosine(46) in tRNA + S-adenosyl-L-homocysteine. It functions in the pathway tRNA modification; N(7)-methylguanine-tRNA biosynthesis. Its function is as follows. Catalyzes the formation of N(7)-methylguanine at position 46 (m7G46) in tRNA. The sequence is that of tRNA (guanine-N(7)-)-methyltransferase from Aedes aegypti (Yellowfever mosquito).